Here is a 334-residue protein sequence, read N- to C-terminus: Anthranilate phosphoribosyltransferase (334 aa).

Residues G81, 84–85 (GD), T89, 91–94 (NIST), 109–117 (KHGSRSVSS), and A121 contribute to the 5-phospho-alpha-D-ribose 1-diphosphate site. G81 contacts anthranilate. S93 serves as a coordination point for Mg(2+). R167 lines the anthranilate pocket. 2 residues coordinate Mg(2+): D225 and E226.

Belongs to the anthranilate phosphoribosyltransferase family. Homodimer. Mg(2+) serves as cofactor.

The enzyme catalyses N-(5-phospho-beta-D-ribosyl)anthranilate + diphosphate = 5-phospho-alpha-D-ribose 1-diphosphate + anthranilate. Its pathway is amino-acid biosynthesis; L-tryptophan biosynthesis; L-tryptophan from chorismate: step 2/5. Catalyzes the transfer of the phosphoribosyl group of 5-phosphorylribose-1-pyrophosphate (PRPP) to anthranilate to yield N-(5'-phosphoribosyl)-anthranilate (PRA). The protein is Anthranilate phosphoribosyltransferase of Actinobacillus pleuropneumoniae serotype 7 (strain AP76).